Reading from the N-terminus, the 139-residue chain is Protein archease (139 aa).

The Ca(2+) site is built by aspartate 12, aspartate 138, and isoleucine 139.

The protein belongs to the archease family.

Its function is as follows. Activates the tRNA-splicing ligase complex by facilitating the enzymatic turnover of catalytic subunit RtcB. Acts by promoting the guanylylation of RtcB, a key intermediate step in tRNA ligation. Can also alter the NTP specificity of RtcB such that ATP, dGTP or ITP is used efficiently. In Sulfurisphaera tokodaii (strain DSM 16993 / JCM 10545 / NBRC 100140 / 7) (Sulfolobus tokodaii), this protein is Protein archease.